The chain runs to 524 residues: Serine/threonine-protein kinase PAK 2 (524 aa).

A disordered region spans residues 1-81 (MSDNGELEDK…PEISPPSDFE (81 aa)). At Ser-2 the chain carries N-acetylserine. Residues Ser-2, Ser-20, Ser-55, and Ser-58 each carry the phosphoserine modification. Phosphothreonine is present on Thr-60. Lys-62 bears the N6-acetyllysine mark. At Ser-64 the chain carries Phosphoserine. Residues 67 to 81 (KEKERPEISPPSDFE) show a composition bias toward basic and acidic residues. The segment at 69–112 (KERPEISPPSDFEHTIHVGFDAVTGEFTGMPEQWARLLQTSNIT) is GTPase-binding. Positions 69–137 (KERPEISPPS…KFYDSNTVKQ (69 aa)) are autoregulatory region. The CRIB domain occupies 74–87 (ISPPSDFEHTIHVG). Lys-128 carries the post-translational modification N6-acetyllysine. Thr-134 carries the post-translational modification Phosphothreonine. Tyr-139 carries the post-translational modification Phosphotyrosine. The residue at position 141 (Ser-141) is a Phosphoserine. Thr-143 carries the phosphothreonine modification. Disordered regions lie at residues 143-164 (TPPE…GTEA) and 169-188 (TEEE…PRPD). A Phosphoserine modification is found at Ser-152. Phosphothreonine is present on residues Thr-154 and Thr-169. A compositionally biased stretch (acidic residues) spans 169–178 (TEEEDDDEET). A Phosphoserine modification is found at Ser-197. Gly-213 carries N-myristoyl glycine; in form PAK-2p34 lipidation. The Nuclear localization signal motif lies at 245-251 (PKKKYTR). One can recognise a Protein kinase domain in the interval 249–499 (YTRYEKIGQG…SAKELLQHPF (251 aa)). ATP-binding positions include 255–263 (IGQGASGTV) and Lys-278. Arg-367 (proton acceptor) is an active-site residue. Thr-402 bears the Phosphothreonine; by autocatalysis mark.

This sequence belongs to the protein kinase superfamily. STE Ser/Thr protein kinase family. STE20 subfamily. Interacts tightly with GTP-bound but not GDP-bound CDC42/p21 and RAC1. Interacts with SH3MD4. Interacts with SCRIB. Interacts with ARHGEF7 and GIT1. PAK-2p34 interacts with ARHGAP10. In terms of assembly, (Microbial infection) Interacts with and activated by HIV-1 Nef. In terms of processing, full-length PAK2 is autophosphorylated when activated by CDC42/p21. Following cleavage, both peptides, PAK-2p27 and PAK-2p34, become highly autophosphorylated, with PAK-2p27 being phosphorylated on serine and PAK-2p34 on threonine residues, respectively. Autophosphorylation of PAK-2p27 can occur in the absence of any effectors and is dependent on phosphorylation of Thr-402, because PAK-2p27 is acting as an exogenous substrate. Post-translationally, during apoptosis proteolytically cleaved by caspase-3 or caspase-3-like proteases to yield active PAK-2p34. Ubiquitinated, leading to its proteasomal degradation. In terms of processing, PAK-2p34 is myristoylated. In terms of tissue distribution, ubiquitously expressed. Higher levels seen in skeletal muscle, ovary, thymus and spleen.

The protein localises to the cytoplasm. It localises to the nucleus. Its subcellular location is the perinuclear region. It is found in the membrane. The enzyme catalyses L-seryl-[protein] + ATP = O-phospho-L-seryl-[protein] + ADP + H(+). The catalysed reaction is L-threonyl-[protein] + ATP = O-phospho-L-threonyl-[protein] + ADP + H(+). With respect to regulation, activated by binding small G proteins. Binding of GTP-bound CDC42 or RAC1 to the autoregulatory region releases monomers from the autoinhibited dimer, enables phosphorylation of Thr-402 and allows the kinase domain to adopt an active structure. Following caspase cleavage, autophosphorylated PAK-2p34 is constitutively active. Functionally, serine/threonine protein kinase that plays a role in a variety of different signaling pathways including cytoskeleton regulation, cell motility, cell cycle progression, apoptosis or proliferation. Acts as a downstream effector of the small GTPases CDC42 and RAC1. Activation by the binding of active CDC42 and RAC1 results in a conformational change and a subsequent autophosphorylation on several serine and/or threonine residues. Full-length PAK2 stimulates cell survival and cell growth. Phosphorylates MAPK4 and MAPK6 and activates the downstream target MAPKAPK5, a regulator of F-actin polymerization and cell migration. Phosphorylates JUN and plays an important role in EGF-induced cell proliferation. Phosphorylates many other substrates including histone H4 to promote assembly of H3.3 and H4 into nucleosomes, BAD, ribosomal protein S6, or MBP. Phosphorylates CASP7, thereby preventing its activity. Additionally, associates with ARHGEF7 and GIT1 to perform kinase-independent functions such as spindle orientation control during mitosis. On the other hand, apoptotic stimuli such as DNA damage lead to caspase-mediated cleavage of PAK2, generating PAK-2p34, an active p34 fragment that translocates to the nucleus and promotes cellular apoptosis involving the JNK signaling pathway. Caspase-activated PAK2 phosphorylates MKNK1 and reduces cellular translation. This chain is Serine/threonine-protein kinase PAK 2 (PAK2), found in Homo sapiens (Human).